We begin with the raw amino-acid sequence, 339 residues long: UDP-3-O-acylglucosamine N-acyltransferase (339 aa).

His238 acts as the Proton acceptor in catalysis.

The protein belongs to the transferase hexapeptide repeat family. LpxD subfamily. As to quaternary structure, homotrimer.

It carries out the reaction a UDP-3-O-[(3R)-3-hydroxyacyl]-alpha-D-glucosamine + a (3R)-hydroxyacyl-[ACP] = a UDP-2-N,3-O-bis[(3R)-3-hydroxyacyl]-alpha-D-glucosamine + holo-[ACP] + H(+). The protein operates within bacterial outer membrane biogenesis; LPS lipid A biosynthesis. Its function is as follows. Catalyzes the N-acylation of UDP-3-O-acylglucosamine using 3-hydroxyacyl-ACP as the acyl donor. Is involved in the biosynthesis of lipid A, a phosphorylated glycolipid that anchors the lipopolysaccharide to the outer membrane of the cell. This Aeromonas hydrophila subsp. hydrophila (strain ATCC 7966 / DSM 30187 / BCRC 13018 / CCUG 14551 / JCM 1027 / KCTC 2358 / NCIMB 9240 / NCTC 8049) protein is UDP-3-O-acylglucosamine N-acyltransferase.